Consider the following 38-residue polypeptide: Glutathione S-transferase 2 (38 aa).

This sequence belongs to the GST superfamily. Phi family.

The catalysed reaction is RX + glutathione = an S-substituted glutathione + a halide anion + H(+). In terms of biological role, conjugation of reduced glutathione to a wide number of exogenous and endogenous hydrophobic electrophiles. In plants, may have a detoxification role against certain herbicides. In Populus euphratica (Euphrates poplar), this protein is Glutathione S-transferase 2.